We begin with the raw amino-acid sequence, 575 residues long: Potassium-transporting ATPase potassium-binding subunit (575 aa).

A run of 12 helical transmembrane segments spans residues 4–24 (SAWG…WPVG), 61–81 (LRYA…VYAL), 133–153 (GLAV…FALI), 180–200 (LWVL…QGVI), 258–278 (LANL…CFAF), 289–309 (WAVL…VIPA), 344–364 (IDAS…AVIA), 372–392 (LGGM…GGVG), 394–414 (GLYG…LMIG), 431–451 (LISI…AVAV), 499–519 (LLGL…LAIA), and 545–565 (LLIG…LALG).

This sequence belongs to the KdpA family. As to quaternary structure, the system is composed of three essential subunits: KdpA, KdpB and KdpC.

The protein resides in the cell inner membrane. Its function is as follows. Part of the high-affinity ATP-driven potassium transport (or Kdp) system, which catalyzes the hydrolysis of ATP coupled with the electrogenic transport of potassium into the cytoplasm. This subunit binds the periplasmic potassium ions and delivers the ions to the membrane domain of KdpB through an intramembrane tunnel. The sequence is that of Potassium-transporting ATPase potassium-binding subunit from Variovorax paradoxus (strain S110).